A 254-amino-acid chain; its full sequence is Pyrroloquinoline-quinone synthase (254 aa).

This sequence belongs to the PqqC family.

It catalyses the reaction 6-(2-amino-2-carboxyethyl)-7,8-dioxo-1,2,3,4,7,8-hexahydroquinoline-2,4-dicarboxylate + 3 O2 = pyrroloquinoline quinone + 2 H2O2 + 2 H2O + H(+). Its pathway is cofactor biosynthesis; pyrroloquinoline quinone biosynthesis. Ring cyclization and eight-electron oxidation of 3a-(2-amino-2-carboxyethyl)-4,5-dioxo-4,5,6,7,8,9-hexahydroquinoline-7,9-dicarboxylic-acid to PQQ. The protein is Pyrroloquinoline-quinone synthase of Rhodopseudomonas palustris (strain TIE-1).